The chain runs to 154 residues: Calmodulin-like protein 6 (154 aa).

4 EF-hand domains span residues 1–36, 37–72, 77–112, and 115–150; these read MDST…LGII, IPED…IMVE, VGEE…LGLK, and KTLE…GRFF. Positions 14, 16, 18, 20, 25, 50, 52, 54, 56, 61, 90, 92, 94, 101, 128, 130, 132, 134, and 139 each coordinate Ca(2+).

This sequence belongs to the calmodulin family.

Potential calcium sensor. The sequence is that of Calmodulin-like protein 6 (CML6) from Arabidopsis thaliana (Mouse-ear cress).